Reading from the N-terminus, the 612-residue chain is Phragmoplastin DRP1D (612 aa).

Met-1 is modified (N-acetylmethionine). Residues 32–301 enclose the Dynamin-type G domain; the sequence is WEALPSVAVV…LESVIRSRIP (270 aa). The interval 42 to 49 is G1 motif; it reads GGQSSGKS. A GTP-binding site is contributed by 45 to 50; that stretch reads SSGKSS. The tract at residues 68–70 is G2 motif; it reads VTR. A G3 motif region spans residues 143–146; the sequence is DLPG. The interval 212–215 is G4 motif; the sequence is TKLD. Residues 213-218 and 243-246 contribute to the GTP site; these read KLDLMD and NRSQ. A G5 motif region spans residues 242 to 245; sequence VNRS. The region spanning 520 to 612 is the GED domain; that stretch reads FRKIASNVAA…DEIDAAVWVR (93 aa).

Belongs to the TRAFAC class dynamin-like GTPase superfamily. Dynamin/Fzo/YdjA family. Forms homodimer and may homooligomerize and heterooligomerize to form the phragmoplastin complex. Binds to PHIP1.

It is found in the cytoplasm. The protein resides in the cytoskeleton. It catalyses the reaction GTP + H2O = GDP + phosphate + H(+). In terms of biological role, putative microtubule-associated force-producing protein. Has a GTPase activity. The polypeptide is Phragmoplastin DRP1D (Arabidopsis thaliana (Mouse-ear cress)).